We begin with the raw amino-acid sequence, 81 residues long: Small ribosomal subunit protein bS16 (81 aa).

This sequence belongs to the bacterial ribosomal protein bS16 family.

The sequence is that of Small ribosomal subunit protein bS16 from Caldicellulosiruptor bescii (strain ATCC BAA-1888 / DSM 6725 / KCTC 15123 / Z-1320) (Anaerocellum thermophilum).